A 696-amino-acid polypeptide reads, in one-letter code: Elongation factor G (696 aa).

The tr-type G domain occupies 8 to 290 (ERYRNIGISA…KVIELMPAPT (283 aa)). GTP-binding positions include 17–24 (AHIDAGKT), 88–92 (DTPGH), and 142–145 (NKMD).

It belongs to the TRAFAC class translation factor GTPase superfamily. Classic translation factor GTPase family. EF-G/EF-2 subfamily.

It localises to the cytoplasm. Functionally, catalyzes the GTP-dependent ribosomal translocation step during translation elongation. During this step, the ribosome changes from the pre-translocational (PRE) to the post-translocational (POST) state as the newly formed A-site-bound peptidyl-tRNA and P-site-bound deacylated tRNA move to the P and E sites, respectively. Catalyzes the coordinated movement of the two tRNA molecules, the mRNA and conformational changes in the ribosome. The polypeptide is Elongation factor G (Thiobacillus denitrificans (strain ATCC 25259 / T1)).